The following is a 479-amino-acid chain: MAEKSYQAGVKEYRKTYWTPEYVPLDTDLLAVFKIVAQAGVPREEAAAAVAAESSTGTWTTVWTDLLTDLDYYKGRAYRIEPVPGDDNAFYAFIAYPIDLFEEGSVVNVLTSLVGNVFGFKAVRSLRLEDIRFPLAYVKTCGGPPNGIQLERDRLNKYGRPLLGCTIKPKLGLSAKNYGRAVYECLRGGLDFTKDDENINSQPFMRWQHRFEFVMEAVHKATSETGERKGHYLNVTAPTPEEMYKRAEFAKSLGAPIIMHDFLTAGFTANTGLANWCRENGMLLHIHRAMHAVLDRNPMHGIHFRVLTKCLRLSGGDHLHSGTVVGKLEGDREATIGWVDLMREPFVPENRARGIFFDQDWGAMPGVMPVASGGIHVWHMPALTAIFGDDACFQFGGGTLGHPWGNAAGAHANRVALEACVEARNQGRPVEREGREILTEAAQHSPELKIAMETWKEIKFEFDVVDKLDTGPMLRVVNA.

Substrate contacts are provided by N116 and T166. K168 acts as the Proton acceptor in catalysis. K170 lines the substrate pocket. The Mg(2+) site is built by K194, D196, and E197. K194 bears the N6-carboxylysine mark. The active-site Proton acceptor is H287. 3 residues coordinate substrate: R288, H320, and S372.

Belongs to the RuBisCO large chain family. Type I subfamily. As to quaternary structure, heterohexadecamer of 8 large chains and 8 small chains. The cofactor is Mg(2+).

The catalysed reaction is 2 (2R)-3-phosphoglycerate + 2 H(+) = D-ribulose 1,5-bisphosphate + CO2 + H2O. It carries out the reaction D-ribulose 1,5-bisphosphate + O2 = 2-phosphoglycolate + (2R)-3-phosphoglycerate + 2 H(+). Functionally, ruBisCO catalyzes two reactions: the carboxylation of D-ribulose 1,5-bisphosphate, the primary event in carbon dioxide fixation, as well as the oxidative fragmentation of the pentose substrate. Both reactions occur simultaneously and in competition at the same active site. The chain is Ribulose bisphosphate carboxylase large chain 2 from Bradyrhizobium sp. (strain ORS 278).